The chain runs to 95 residues: MASANALGMIETKGLVGAIEAADAMVKAANVQLVGKEQVGGGLVTVMVRGDVGAVKAATDAGAAAAERVGELISVHVIPRPHFEVDAILPKVSAE.

The 85-residue stretch at 6–90 folds into the BMC domain; it reads ALGMIETKGL…PHFEVDAILP (85 aa).

It belongs to the bacterial microcompartments protein family. Homohexamer; has a positively charged pore 9 Angstroms in diameter. The hexamers pack into a two-dimensional array. May interact with EutQ.

It localises to the bacterial microcompartment. Its pathway is amine and polyamine degradation; ethanolamine degradation. In terms of biological role, a component of the bacterial microcompartment (BMC) shell dedicated to ethanolamine degradation. Each homohexamer has a central pore with an opening of up to 9.0 Angstroms. Expression of the eut operon may allow this bacteria to use ethanolamine as a carbon, nitrogen and energy source. The pore probably allows metabolite passage into and out of the BMC. This Clostridioides difficile (strain 630) (Peptoclostridium difficile) protein is Bacterial microcompartment shell protein EutM.